The sequence spans 153 residues: Antibacterial peptide PMAP-23 (153 aa).

Residues M1–A29 form the signal peptide. Q30 carries the post-translational modification Pyrrolidone carboxylic acid. Positions Q30–V130 are excised as a propeptide. The disordered stretch occupies residues D61–V80. 2 disulfides stabilise this stretch: C85-C96 and C107-C124.

This sequence belongs to the cathelicidin family.

The protein resides in the secreted. In terms of biological role, exerts antimicrobial activity against both Gram-positive and negative bacteria at concentrations of 2-16 micro molar. Its activity appears to be mediated by its ability to damage bacterial membranes. The chain is Antibacterial peptide PMAP-23 (PMAP23) from Sus scrofa (Pig).